Here is a 704-residue protein sequence, read N- to C-terminus: Elongation factor G (704 aa).

A tr-type G domain is found at 8–290 (EKYRNIGICA…GVVRYLPAPN (283 aa)). Residues 17-24 (AHVDAGKT), 88-92 (DTPGH), and 142-145 (NKMD) each bind GTP.

It belongs to the TRAFAC class translation factor GTPase superfamily. Classic translation factor GTPase family. EF-G/EF-2 subfamily.

It localises to the cytoplasm. In terms of biological role, catalyzes the GTP-dependent ribosomal translocation step during translation elongation. During this step, the ribosome changes from the pre-translocational (PRE) to the post-translocational (POST) state as the newly formed A-site-bound peptidyl-tRNA and P-site-bound deacylated tRNA move to the P and E sites, respectively. Catalyzes the coordinated movement of the two tRNA molecules, the mRNA and conformational changes in the ribosome. In Francisella tularensis subsp. holarctica (strain LVS), this protein is Elongation factor G.